The sequence spans 174 residues: ATP synthase subunit b (174 aa).

The helical transmembrane segment at 9–29 (LPNTSLIFWEVVTFLILLALL) threads the bilayer.

This sequence belongs to the ATPase B chain family. F-type ATPases have 2 components, F(1) - the catalytic core - and F(0) - the membrane proton channel. F(1) has five subunits: alpha(3), beta(3), gamma(1), delta(1), epsilon(1). F(0) has three main subunits: a(1), b(2) and c(10-14). The alpha and beta chains form an alternating ring which encloses part of the gamma chain. F(1) is attached to F(0) by a central stalk formed by the gamma and epsilon chains, while a peripheral stalk is formed by the delta and b chains.

Its subcellular location is the cell membrane. Its function is as follows. F(1)F(0) ATP synthase produces ATP from ADP in the presence of a proton or sodium gradient. F-type ATPases consist of two structural domains, F(1) containing the extramembraneous catalytic core and F(0) containing the membrane proton channel, linked together by a central stalk and a peripheral stalk. During catalysis, ATP synthesis in the catalytic domain of F(1) is coupled via a rotary mechanism of the central stalk subunits to proton translocation. In terms of biological role, component of the F(0) channel, it forms part of the peripheral stalk, linking F(1) to F(0). The polypeptide is ATP synthase subunit b (Rubrobacter xylanophilus (strain DSM 9941 / JCM 11954 / NBRC 16129 / PRD-1)).